The primary structure comprises 347 residues: Phenylalanine--tRNA ligase alpha subunit (347 aa).

E261 is a Mg(2+) binding site.

The protein belongs to the class-II aminoacyl-tRNA synthetase family. Phe-tRNA synthetase alpha subunit type 1 subfamily. Tetramer of two alpha and two beta subunits. It depends on Mg(2+) as a cofactor.

The protein localises to the cytoplasm. The catalysed reaction is tRNA(Phe) + L-phenylalanine + ATP = L-phenylalanyl-tRNA(Phe) + AMP + diphosphate + H(+). The protein is Phenylalanine--tRNA ligase alpha subunit of Streptococcus equi subsp. zooepidemicus (strain MGCS10565).